The following is a 154-amino-acid chain: Phosphopantetheine adenylyltransferase (154 aa).

Thr10 serves as a coordination point for substrate. ATP is bound by residues 10-11 (TF) and His18. Substrate is bound by residues Lys42, Leu74, and Arg88. ATP contacts are provided by residues 89-91 (GLR), Glu99, and 124-130 (NAFISSS).

This sequence belongs to the bacterial CoaD family. As to quaternary structure, homohexamer. It depends on Mg(2+) as a cofactor.

The protein resides in the cytoplasm. The catalysed reaction is (R)-4'-phosphopantetheine + ATP + H(+) = 3'-dephospho-CoA + diphosphate. The protein operates within cofactor biosynthesis; coenzyme A biosynthesis; CoA from (R)-pantothenate: step 4/5. In terms of biological role, reversibly transfers an adenylyl group from ATP to 4'-phosphopantetheine, yielding dephospho-CoA (dPCoA) and pyrophosphate. This chain is Phosphopantetheine adenylyltransferase, found in Nautilia profundicola (strain ATCC BAA-1463 / DSM 18972 / AmH).